Reading from the N-terminus, the 167-residue chain is Crossover junction endodeoxyribonuclease RuvC (167 aa).

Catalysis depends on residues Asp-11, Glu-71, and Asp-143. Residues Asp-11, Glu-71, and Asp-143 each contribute to the Mg(2+) site.

This sequence belongs to the RuvC family. In terms of assembly, homodimer which binds Holliday junction (HJ) DNA. The HJ becomes 2-fold symmetrical on binding to RuvC with unstacked arms; it has a different conformation from HJ DNA in complex with RuvA. In the full resolvosome a probable DNA-RuvA(4)-RuvB(12)-RuvC(2) complex forms which resolves the HJ. Requires Mg(2+) as cofactor.

The protein localises to the cytoplasm. The catalysed reaction is Endonucleolytic cleavage at a junction such as a reciprocal single-stranded crossover between two homologous DNA duplexes (Holliday junction).. Its function is as follows. The RuvA-RuvB-RuvC complex processes Holliday junction (HJ) DNA during genetic recombination and DNA repair. Endonuclease that resolves HJ intermediates. Cleaves cruciform DNA by making single-stranded nicks across the HJ at symmetrical positions within the homologous arms, yielding a 5'-phosphate and a 3'-hydroxyl group; requires a central core of homology in the junction. The consensus cleavage sequence is 5'-(A/T)TT(C/G)-3'. Cleavage occurs on the 3'-side of the TT dinucleotide at the point of strand exchange. HJ branch migration catalyzed by RuvA-RuvB allows RuvC to scan DNA until it finds its consensus sequence, where it cleaves and resolves the cruciform DNA. The polypeptide is Crossover junction endodeoxyribonuclease RuvC (Acidiphilium cryptum (strain JF-5)).